The chain runs to 453 residues: Bifunctional protein GlmU (453 aa).

The pyrophosphorylase stretch occupies residues Met1–Arg226. Residues Leu8 to Gly11, Lys22, Gln73, Gly78 to Thr79, Tyr99 to Asp101, Gly136, Glu151, Asn166, and Asn224 contribute to the UDP-N-acetyl-alpha-D-glucosamine site. Asp101 is a binding site for Mg(2+). Asn224 serves as a coordination point for Mg(2+). The tract at residues Ser227–Glu247 is linker. Residues Gly248–Ser453 are N-acetyltransferase. Positions 330 and 348 each coordinate UDP-N-acetyl-alpha-D-glucosamine. The Proton acceptor role is filled by His360. UDP-N-acetyl-alpha-D-glucosamine-binding residues include Tyr363 and Asn374. Residues Ala377, Asn383 to Tyr384, Ser402, Ala420, and Arg437 contribute to the acetyl-CoA site.

It in the N-terminal section; belongs to the N-acetylglucosamine-1-phosphate uridyltransferase family. The protein in the C-terminal section; belongs to the transferase hexapeptide repeat family. As to quaternary structure, homotrimer. Mg(2+) is required as a cofactor.

The protein localises to the cytoplasm. It carries out the reaction alpha-D-glucosamine 1-phosphate + acetyl-CoA = N-acetyl-alpha-D-glucosamine 1-phosphate + CoA + H(+). It catalyses the reaction N-acetyl-alpha-D-glucosamine 1-phosphate + UTP + H(+) = UDP-N-acetyl-alpha-D-glucosamine + diphosphate. It participates in nucleotide-sugar biosynthesis; UDP-N-acetyl-alpha-D-glucosamine biosynthesis; N-acetyl-alpha-D-glucosamine 1-phosphate from alpha-D-glucosamine 6-phosphate (route II): step 2/2. The protein operates within nucleotide-sugar biosynthesis; UDP-N-acetyl-alpha-D-glucosamine biosynthesis; UDP-N-acetyl-alpha-D-glucosamine from N-acetyl-alpha-D-glucosamine 1-phosphate: step 1/1. It functions in the pathway bacterial outer membrane biogenesis; LPS lipid A biosynthesis. Functionally, catalyzes the last two sequential reactions in the de novo biosynthetic pathway for UDP-N-acetylglucosamine (UDP-GlcNAc). The C-terminal domain catalyzes the transfer of acetyl group from acetyl coenzyme A to glucosamine-1-phosphate (GlcN-1-P) to produce N-acetylglucosamine-1-phosphate (GlcNAc-1-P), which is converted into UDP-GlcNAc by the transfer of uridine 5-monophosphate (from uridine 5-triphosphate), a reaction catalyzed by the N-terminal domain. This is Bifunctional protein GlmU from Chromohalobacter salexigens (strain ATCC BAA-138 / DSM 3043 / CIP 106854 / NCIMB 13768 / 1H11).